The sequence spans 97 residues: Co-chaperonin GroES (97 aa).

The protein belongs to the GroES chaperonin family. As to quaternary structure, heptamer of 7 subunits arranged in a ring. Interacts with the chaperonin GroEL.

It is found in the cytoplasm. In terms of biological role, together with the chaperonin GroEL, plays an essential role in assisting protein folding. The GroEL-GroES system forms a nano-cage that allows encapsulation of the non-native substrate proteins and provides a physical environment optimized to promote and accelerate protein folding. GroES binds to the apical surface of the GroEL ring, thereby capping the opening of the GroEL channel. This is Co-chaperonin GroES from Erwinia tasmaniensis (strain DSM 17950 / CFBP 7177 / CIP 109463 / NCPPB 4357 / Et1/99).